We begin with the raw amino-acid sequence, 121 residues long: Large ribosomal subunit protein bL12 (121 aa).

This sequence belongs to the bacterial ribosomal protein bL12 family. As to quaternary structure, homodimer. Part of the ribosomal stalk of the 50S ribosomal subunit. Forms a multimeric L10(L12)X complex, where L10 forms an elongated spine to which 2 to 4 L12 dimers bind in a sequential fashion. Binds GTP-bound translation factors.

In terms of biological role, forms part of the ribosomal stalk which helps the ribosome interact with GTP-bound translation factors. Is thus essential for accurate translation. This is Large ribosomal subunit protein bL12 from Mesomycoplasma hyopneumoniae (strain 232) (Mycoplasma hyopneumoniae).